Here is a 487-residue protein sequence, read N- to C-terminus: NADH-quinone oxidoreductase subunit N (487 aa).

A run of 14 helical transmembrane segments spans residues 16 to 36 (VIMPEVILSVLGMALLLVNVF), 45 to 65 (LAWLSLIGIVGAGFAAVTGWG), 79 to 99 (NFAIFFKIIFLLAAGLAVLIS), 111 to 131 (GELYPIILFTTVGMMLMAAAT), 133 to 153 (LMTIFLGLELMSISLYVLAGF), 168 to 188 (FLLGAFSTGFLLYGMALIYGV), 212 to 232 (LLIGMFLMLTGFLFKIAAAPF), 257 to 276 (AAGFAAMLRLLLVAFPAMIA), 281 to 298 (LLWILAVLTMTVGNFTAL), 306 to 326 (MLAYSSIAHAGYCLVGFASGT), 333 to 353 (ILFYMLSYTFMNIGAFAVIVL), 378 to 398 (ALAMTVFMFSLAGMPPTAGFI), 413 to 435 (IWLAIIGVLNSAASVYYYLRVIV), and 457 to 477 (LALVVSAAGSLIPGIIPSMIL).

This sequence belongs to the complex I subunit 2 family. In terms of assembly, NDH-1 is composed of 14 different subunits. Subunits NuoA, H, J, K, L, M, N constitute the membrane sector of the complex.

The protein localises to the cell inner membrane. The catalysed reaction is a quinone + NADH + 5 H(+)(in) = a quinol + NAD(+) + 4 H(+)(out). Its function is as follows. NDH-1 shuttles electrons from NADH, via FMN and iron-sulfur (Fe-S) centers, to quinones in the respiratory chain. The immediate electron acceptor for the enzyme in this species is believed to be ubiquinone. Couples the redox reaction to proton translocation (for every two electrons transferred, four hydrogen ions are translocated across the cytoplasmic membrane), and thus conserves the redox energy in a proton gradient. This Trichlorobacter lovleyi (strain ATCC BAA-1151 / DSM 17278 / SZ) (Geobacter lovleyi) protein is NADH-quinone oxidoreductase subunit N.